The following is a 319-amino-acid chain: Aspartate carbamoyltransferase catalytic subunit (319 aa).

Positions 65 and 66 each coordinate carbamoyl phosphate. Residue Lys93 coordinates L-aspartate. Carbamoyl phosphate is bound by residues Arg115, His143, and Gln146. Residues Arg176 and Arg230 each coordinate L-aspartate. Gly271 and Pro272 together coordinate carbamoyl phosphate.

Belongs to the aspartate/ornithine carbamoyltransferase superfamily. ATCase family. In terms of assembly, heterododecamer (2C3:3R2) of six catalytic PyrB chains organized as two trimers (C3), and six regulatory PyrI chains organized as three dimers (R2).

It carries out the reaction carbamoyl phosphate + L-aspartate = N-carbamoyl-L-aspartate + phosphate + H(+). Its pathway is pyrimidine metabolism; UMP biosynthesis via de novo pathway; (S)-dihydroorotate from bicarbonate: step 2/3. Catalyzes the condensation of carbamoyl phosphate and aspartate to form carbamoyl aspartate and inorganic phosphate, the committed step in the de novo pyrimidine nucleotide biosynthesis pathway. This is Aspartate carbamoyltransferase catalytic subunit from Chelativorans sp. (strain BNC1).